A 679-amino-acid chain; its full sequence is NADPH--cytochrome P450 reductase (679 aa).

The Lumenal segment spans residues 1–21 (MASEQTIDGAAAIPSGGGDEP). The chain crosses the membrane as a helical span at residues 22-42 (FLGLLDVALLAVLIGGAAFYF). The Cytoplasmic segment spans residues 43-679 (LRSRKKEEEP…QKRYSADVWS (637 aa)). Residues 84–228 (LVVFYGSQTG…DFITWKDRFW (145 aa)) enclose the Flavodoxin-like domain. Residues 90-95 (SQTGTG), 142-145 (ATYG), 177-186 (LGNKTYEHYN), and D212 contribute to the FMN site. One can recognise an FAD-binding FR-type domain in the interval 283-523 (KNPFLAPIKV…FIRKSQFRLP (241 aa)). R302 provides a ligand contact to NADP(+). FAD-binding positions include 458 to 461 (RYYS), 476 to 478 (TAV), Y482, and 492 to 495 (GVAT). NADP(+) is bound by residues T537, 597–598 (SR), 603–607 (KVYVQ), and D640. W678 contacts FAD.

The protein belongs to the NADPH--cytochrome P450 reductase family. In the N-terminal section; belongs to the flavodoxin family. This sequence in the C-terminal section; belongs to the flavoprotein pyridine nucleotide cytochrome reductase family. In terms of assembly, interacts with sturkopf. Requires FAD as cofactor. The cofactor is FMN. High in antennae.

Its subcellular location is the endoplasmic reticulum membrane. It carries out the reaction 2 oxidized [cytochrome P450] + NADPH = 2 reduced [cytochrome P450] + NADP(+) + H(+). This enzyme is required for electron transfer from NADP to cytochrome p450 in microsomes. It can also provide electron transfer to heme oxygenase and cytochrome b5. May function to clear the olfactory organ (antennae) from accumulating chemicals. In Drosophila melanogaster (Fruit fly), this protein is NADPH--cytochrome P450 reductase (Cpr).